Consider the following 290-residue polypeptide: Taxis protein CheF1 (290 aa).

In terms of assembly, interacts with chemotaxis (Che) proteins as well as flagella accessory (Fla) proteins.

Functionally, involved in taxis signal transduction. Essential for the ability to control the direction of flagellar rotation. May have a role between CheY and the flagellum. The polypeptide is Taxis protein CheF1 (cheF1) (Halobacterium salinarum (strain ATCC 29341 / DSM 671 / R1)).